The primary structure comprises 91 residues: Lipolysis-activating peptide 1-alpha chain (91 aa).

A signal peptide spans 1 to 22; sequence MMKLVLFGIIVILFSLIGSIHG. In terms of domain architecture, LCN-type CS-alpha/beta spans 24–87; it reads SGNYPLNPYG…VWNAVKKHCK (64 aa). Cystine bridges form between cysteine 38–cysteine 61, cysteine 47–cysteine 66, and cysteine 51–cysteine 68.

This sequence belongs to the long (3 C-C) scorpion toxin superfamily. As to quaternary structure, monomer (edited version) and heterodimer (non-edited version) of this alpha chain and a beta chain (AC P84809). In terms of tissue distribution, expressed by the venom gland.

The protein resides in the secreted. The heterodimer non-edited LVP1 induces lipolysis in rat adipocytes. Induction of lipolysis by LVP1 appears to be mediated through the beta-2 adrenergic receptor pathway (ADRB2). Intracerebroventricular injection is not toxic to mice. Functionally, the edited BmKBTx-like, similar to beta-toxins, may modulate voltage-gated sodium channels (Nav) and may block voltage-gated potassium channels (Kv). This Buthus occitanus tunetanus (Common European scorpion) protein is Lipolysis-activating peptide 1-alpha chain.